A 453-amino-acid polypeptide reads, in one-letter code: tRNA modification GTPase MnmE (453 aa).

Positions 23, 80, and 120 each coordinate (6S)-5-formyl-5,6,7,8-tetrahydrofolate. Residues G216 to C375 form the TrmE-type G domain. N226 serves as a coordination point for K(+). GTP-binding positions include N226–S231, T245–T251, and D270–G273. S230 contributes to the Mg(2+) binding site. K(+)-binding residues include T245, I247, and T250. T251 contributes to the Mg(2+) binding site. A (6S)-5-formyl-5,6,7,8-tetrahydrofolate-binding site is contributed by K453.

This sequence belongs to the TRAFAC class TrmE-Era-EngA-EngB-Septin-like GTPase superfamily. TrmE GTPase family. As to quaternary structure, homodimer. Heterotetramer of two MnmE and two MnmG subunits. K(+) serves as cofactor.

The protein localises to the cytoplasm. Functionally, exhibits a very high intrinsic GTPase hydrolysis rate. Involved in the addition of a carboxymethylaminomethyl (cmnm) group at the wobble position (U34) of certain tRNAs, forming tRNA-cmnm(5)s(2)U34. The sequence is that of tRNA modification GTPase MnmE from Wigglesworthia glossinidia brevipalpis.